The primary structure comprises 776 residues: Photosystem I P700 chlorophyll a apoprotein A1 (776 aa).

The next 8 helical transmembrane spans lie at 76 to 99, 162 to 185, 201 to 225, 309 to 327, 368 to 391, 407 to 433, 455 to 477, and 557 to 575; these read IFSA…FHGA, LMAL…FHYH, LQHH…HVAN, VAHH…GHVY, WHAQ…HHMY, LGLF…IAVI, AIIS…LYIH, and LMIH…LILL. [4Fe-4S] cluster is bound by residues Cys599 and Cys608. The next 2 helical transmembrane spans lie at 615–636 and 690–712; these read HVFL…YFSW and LSGY…MFLF. Divinylchlorophyll a' is bound at residue His701. Residues Met709 and Tyr717 each coordinate divinyl chlorophyll a. Trp718 is a phylloquinone binding site. Residues 750-770 form a helical membrane-spanning segment; that stretch reads AVGVTHFLFGGIVTTWAFFHA.

Belongs to the PsaA/PsaB family. In terms of assembly, the PsaA/B heterodimer binds the P700 divinyl chlorophyll special pair and subsequent electron acceptors. PSI consists of a core antenna complex that captures photons, and an electron transfer chain that converts photonic excitation into a charge separation. The cyanobacterial PSI reaction center is composed of one copy each of PsaA,B,C,D,E,F,I,J,K,L,M and X, and forms trimeric complexes. It depends on PSI electron transfer chain: 5 divinyl chlorophyll a, 1 divinyl chlorophyll a', 2 phylloquinones and 3 4Fe-4S clusters. PSI core antenna: 90 divinyl chlorophyll a, 22 carotenoids, 3 phospholipids and 1 galactolipid. P700 is a divinyl chlorophyll a/divinyl chlorophyll a' dimer, A0 is one or more divinyl chlorophyll a, A1 is one or both phylloquinones and FX is a shared 4Fe-4S iron-sulfur center. as a cofactor.

Its subcellular location is the cellular thylakoid membrane. It catalyses the reaction reduced [plastocyanin] + hnu + oxidized [2Fe-2S]-[ferredoxin] = oxidized [plastocyanin] + reduced [2Fe-2S]-[ferredoxin]. PsaA and PsaB bind P700, the primary electron donor of photosystem I (PSI), as well as the electron acceptors A0, A1 and FX. PSI is a plastocyanin/cytochrome c6-ferredoxin oxidoreductase, converting photonic excitation into a charge separation, which transfers an electron from the donor P700 chlorophyll pair to the spectroscopically characterized acceptors A0, A1, FX, FA and FB in turn. Oxidized P700 is reduced on the lumenal side of the thylakoid membrane by plastocyanin or cytochrome c6. This chain is Photosystem I P700 chlorophyll a apoprotein A1, found in Prochlorococcus marinus (strain MIT 9303).